Consider the following 468-residue polypeptide: 3-isopropylmalate dehydratase large subunit (468 aa).

Positions 349, 409, and 412 each coordinate [4Fe-4S] cluster.

It belongs to the aconitase/IPM isomerase family. LeuC type 1 subfamily. In terms of assembly, heterodimer of LeuC and LeuD. The cofactor is [4Fe-4S] cluster.

It catalyses the reaction (2R,3S)-3-isopropylmalate = (2S)-2-isopropylmalate. Its pathway is amino-acid biosynthesis; L-leucine biosynthesis; L-leucine from 3-methyl-2-oxobutanoate: step 2/4. Catalyzes the isomerization between 2-isopropylmalate and 3-isopropylmalate, via the formation of 2-isopropylmaleate. The chain is 3-isopropylmalate dehydratase large subunit from Shewanella baltica (strain OS155 / ATCC BAA-1091).